A 276-amino-acid polypeptide reads, in one-letter code: MESKSEQNEWSSGVWAHLTAVRQQSPLVQCITNFVSMDLVANTLLSAGASPAMVHSVVEIPDFTPHIHALCVNVGTLTPDWLPSMKAAAELASQLRKPWVLDPAAVSCSGFRLKACLELIELKPTVIKGNGSEIIALSSASRGQTKGADSSHESTDAIEAAKSLAMSSGAVVAVSGAVDIVTDGKQVIGVHNGTKMMQQITATGCSLAGLIVAFLAIDSSRVLEATVSAMAVFGIAGELGEAMANGPASLRMHLIDCLYGLDETTVLKRVNVTRLG.

Substrate-binding residues include Met-53 and Ala-202.

This sequence belongs to the Thz kinase family. Mg(2+) serves as cofactor.

It catalyses the reaction 5-(2-hydroxyethyl)-4-methylthiazole + ATP = 4-methyl-5-(2-phosphooxyethyl)-thiazole + ADP + H(+). It functions in the pathway cofactor biosynthesis; thiamine diphosphate biosynthesis; 4-methyl-5-(2-phosphoethyl)-thiazole from 5-(2-hydroxyethyl)-4-methylthiazole: step 1/1. Functionally, thiazole kinase involved in thiamine salvage pathway. The protein is Hydroxyethylthiazole kinase (THIM) of Arabidopsis thaliana (Mouse-ear cress).